The primary structure comprises 528 residues: Poly(A) RNA polymerase GLD2 (528 aa).

Disordered stretches follow at residues 1–41 (MYPN…QPQQ) and 99–121 (RDQSPLISPASPSSSFQNRKRRS). Composition is skewed to low complexity over residues 16-32 (PCEQQQPPLEQSQEQPL) and 102-113 (SPLISPASPSSS). 2 residues coordinate Mg(2+): aspartate 259 and aspartate 261. The 54-residue stretch at 428–481 (LGDLLLGFLKYFAIEFDWSKDIISVREAKALPRSDDYEWRNKFICVEEPYDRTN) folds into the PAP-associated domain.

This sequence belongs to the DNA polymerase type-B-like family. GLD2 subfamily. Component of a complex at least composed of cpeb1, cpsf1, tent2/gld2, pabpc1/ePAB, parn and sympk. Following oocyte maturation, parn is expelled from the complex. Interacts with rbm9 and sympk. Mg(2+) serves as cofactor. Requires Mn(2+) as cofactor.

Its subcellular location is the cytoplasm. It catalyses the reaction RNA(n) + ATP = RNA(n)-3'-adenine ribonucleotide + diphosphate. Cytoplasmic poly(A) RNA polymerase that adds successive AMP monomers to the 3'-end of specific RNAs, forming a poly(A) tail. In contrast to the canonical nuclear poly(A) RNA polymerase, it only adds poly(A) to selected cytoplasmic mRNAs during oocyte maturation. Plays a central role during oocyte maturation by mediating polyadenylation of dormant mRNAs, which contain 5'AAUAAA-3' sequence in their 3'-UTR. In immature oocytes, polyadenylation of poly(A) tails is counteracted by the ribonuclease parn. During maturation parn is excluded from the ribonucleoprotein complex, allowing poly(A) elongation and activation of mRNAs. May not play a role in replication-dependent histone mRNA degradation. This is Poly(A) RNA polymerase GLD2 (tent2) from Xenopus tropicalis (Western clawed frog).